A 505-amino-acid chain; its full sequence is Glycerol kinase (505 aa).

Threonine 14 serves as a coordination point for ADP. Threonine 14, threonine 15, and serine 16 together coordinate ATP. Threonine 14 is a binding site for sn-glycerol 3-phosphate. Arginine 18 serves as a coordination point for ADP. 4 residues coordinate sn-glycerol 3-phosphate: arginine 84, glutamate 85, tyrosine 136, and aspartate 246. 5 residues coordinate glycerol: arginine 84, glutamate 85, tyrosine 136, aspartate 246, and glutamine 247. Threonine 268 and glycine 311 together coordinate ADP. 4 residues coordinate ATP: threonine 268, glycine 311, glutamine 315, and glycine 412. Residues glycine 412 and asparagine 416 each coordinate ADP.

The protein belongs to the FGGY kinase family.

The catalysed reaction is glycerol + ATP = sn-glycerol 3-phosphate + ADP + H(+). It functions in the pathway polyol metabolism; glycerol degradation via glycerol kinase pathway; sn-glycerol 3-phosphate from glycerol: step 1/1. With respect to regulation, inhibited by fructose 1,6-bisphosphate (FBP). Its function is as follows. Key enzyme in the regulation of glycerol uptake and metabolism. Catalyzes the phosphorylation of glycerol to yield sn-glycerol 3-phosphate. This Vibrio cholerae serotype O1 (strain M66-2) protein is Glycerol kinase.